We begin with the raw amino-acid sequence, 97 residues long: Large ribosomal subunit protein bL28 (97 aa).

The protein belongs to the bacterial ribosomal protein bL28 family.

The sequence is that of Large ribosomal subunit protein bL28 from Nitrobacter winogradskyi (strain ATCC 25391 / DSM 10237 / CIP 104748 / NCIMB 11846 / Nb-255).